The chain runs to 39 residues: Cytochrome b6-f complex subunit 5 (39 aa).

Residues 5–25 (LLSGIVLGLVPVTILGLFVTA) form a helical membrane-spanning segment.

It belongs to the PetG family. In terms of assembly, the 4 large subunits of the cytochrome b6-f complex are cytochrome b6, subunit IV (17 kDa polypeptide, PetD), cytochrome f and the Rieske protein, while the 4 small subunits are PetG, PetL, PetM and PetN. The complex functions as a dimer.

Its subcellular location is the plastid. The protein resides in the chloroplast thylakoid membrane. Component of the cytochrome b6-f complex, which mediates electron transfer between photosystem II (PSII) and photosystem I (PSI), cyclic electron flow around PSI, and state transitions. PetG is required for either the stability or assembly of the cytochrome b6-f complex. This chain is Cytochrome b6-f complex subunit 5, found in Pleurastrum terricola (Filamentous green alga).